A 453-amino-acid chain; its full sequence is Gamma-glutamylpolyamine synthetase GlnA2 (453 aa).

The GS beta-grasp domain maps to 15 to 100 (RDIRFVRLWF…MFCDILMPDG (86 aa)). Positions 107–453 (PRYVLKRALA…FELRKSLPVL (347 aa)) constitute a GS catalytic domain. Residues E130 and E132 each contribute to the Mg(2+) site. E182 contacts ATP. Residues E187 and E194 each contribute to the Mg(2+) site. G239 contacts L-glutamate. H243 lines the Mg(2+) pocket. Residue 245–247 (HLS) coordinates ATP. Positions 296, 310, and 322 each coordinate L-glutamate. Positions 322 and 327 each coordinate ATP. E342 serves as a coordination point for Mg(2+). An L-glutamate-binding site is contributed by R344.

It belongs to the glutamine synthetase family. The cofactor is Mg(2+).

The catalysed reaction is putrescine + L-glutamate + ATP = gamma-L-glutamylputrescine + ADP + phosphate + H(+). The enzyme catalyses spermine + L-glutamate + ATP = gamma-L-glutamylspermine + ADP + phosphate + H(+). It carries out the reaction spermidine + L-glutamate + ATP = gamma-L-glutamylspermidine + ADP + phosphate + H(+). It catalyses the reaction cadaverine + L-glutamate + ATP = gamma-L-glutamylcadaverine + ADP + phosphate + H(+). It functions in the pathway amine and polyamine degradation; putrescine degradation. It participates in amine and polyamine degradation; spermidine degradation. The protein operates within amine and polyamine degradation; spermine degradation. With respect to regulation, no effect on activity with glutamine synthetase (GS) inhibitor methionine sulfoximine (MSO). In terms of biological role, involved in the catabolism of polyamines. Catalyzes the ATP-dependent gamma-glutamylation of polyamines. Substrates include putrescine, cadaverine, spermidine and spermine, with a preference for short-chain polyamine putrescine. No complementation of the L-glutamine auxotrophy of an E.coli glnA mutant. Together with GlnA3, enables survival of S.coelicolor under exposure to high local environmental polyamine concentrations, which is toxic to the cells. This is Gamma-glutamylpolyamine synthetase GlnA2 from Streptomyces coelicolor (strain ATCC BAA-471 / A3(2) / M145).